We begin with the raw amino-acid sequence, 443 residues long: MTELRQRAVREDAPPEDKESESEAKLDGETASDSESRAETAPPPTSIDDTPEVLNRALSNLSSRWKNWWVRGILTMAMIAFFFIIIYLGPMVLMMIVMCVQIKCFHEIITIGYNVYHSYDLPWFRTLSWYFLLCVNYFFYGETVTDYFFTLVQREEPLRILSKYHRFISFTLYLTGFCMFVLSLVKKHYRLQFYMFGWTHVTLLIVVTQSHLVIHNLFEGMIWFIVPISCVICNDIMAYMFGFFFGRTPLIKLSPKKTWEGFIGGFFATVVFGLLLSYVMSGYRCFVCPVEYNNDTNSFTVDCEPSDLFRLQEYNIPGVIQSLVGWKTMRMYPFQIHSALSTFASLIGPFGGFFASGFKRAFKIKDFANTIPGHGGIMDRFDCQYLMATFVNVYIASFIRGPNPSKLIQQFLTLRPDQQLHIFNTLKSHLTDKGILMSALEEE.

Positions 1 to 38 (MTELRQRAVREDAPPEDKESESEAKLDGETASDSESRA) are enriched in basic and acidic residues. Positions 1–51 (MTELRQRAVREDAPPEDKESESEAKLDGETASDSESRAETAPPPTSIDDTP) are disordered. Ser-20 carries the phosphoserine modification. Thr-30 is modified (phosphothreonine). Residues Ser-32, Ser-34, and Ser-36 each carry the phosphoserine modification. Thr-50 carries the phosphothreonine modification. The next 6 membrane-spanning stretches (helical) occupy residues 78-98 (MIAFFFIIIYLGPMVLMMIVM), 129-149 (WYFLLCVNYFFYGETVTDYFF), 165-185 (HRFISFTLYLTGFCMFVLSLV), 212-232 (LVIHNLFEGMIWFIVPISCVI), 261-281 (GFIGGFFATVVFGLLLSYVMS), and 338-358 (SALSTFASLIGPFGGFFASGF).

The protein belongs to the CDS family. As to quaternary structure, homodimer.

The protein localises to the endoplasmic reticulum membrane. The enzyme catalyses a 1,2-diacyl-sn-glycero-3-phosphate + CTP + H(+) = a CDP-1,2-diacyl-sn-glycerol + diphosphate. It carries out the reaction 1-octadecanoyl-2-(5Z,8Z,11Z,14Z-eicosatetraenoyl)-sn-glycero-3-phosphate + CTP + H(+) = 1-octadecanoyl-2-(5Z,8Z,11Z,14Z-eicosatetraenoyl)-sn-glycero-3-cytidine-5'-diphosphate + diphosphate. It catalyses the reaction 1-octadecanoyl-2-(9Z,12Z-octadecadienoyl)-sn-glycero-3-phosphate + CTP + H(+) = 1-octadecanoyl-2-(9Z,12Z-octadecadienoyl)-sn-glycero-3-cytidine-5'-diphosphate + diphosphate. The catalysed reaction is 1-hexadecanoyl-2-(5Z,8Z,11Z,14Z-eicosatetraenoyl)-sn-glycero-3-phosphate + CTP + H(+) = 1-hexadecanoyl-2-(5Z,8Z,11Z,14Z-eicosatetraenoyl)-sn-glycero-3-cytidine-5'-diphosphate + diphosphate. The enzyme catalyses 1,2-di-(5Z,8Z,11Z,14Z)-eicosatetraenoyl-sn-glycero-3-phosphate + CTP + H(+) = 1,2-di-(5Z,8Z,11Z,14Z-eicosatetraenoyl)-sn-glycero-3-cytidine-5'-diphosphate + diphosphate. It carries out the reaction 1-octadecanoyl-2-(9Z-octadecenoyl)-sn-glycero-3-phosphate + CTP + H(+) = 1-octadecanoyl-2-(9Z-octadecenoyl)-sn-glycero-3-cytidine-5'-diphosphate + diphosphate. It catalyses the reaction 1-octadecanoyl-2-(4Z,7Z,10Z,13Z,16Z,19Z-docosahexaenoyl)-sn-glycero-3-phosphate + CTP + H(+) = 1-octadecanoyl-2-(4Z,7Z,10Z,13Z,16Z,19Z-docosahexaenoyl)-sn-glycero-3-cytidine-5'-diphosphate + diphosphate. The catalysed reaction is 1,2-di-(9Z,12Z-octadecadienoyl)-sn-glycero-3-phosphate + CTP + H(+) = 1,2-di-(9Z,12Z-octadecadienoyl)-sn-glycero-3-cytidine-5'-diphosphate + diphosphate. The enzyme catalyses 1,2-di-(9Z-octadecenoyl)-sn-glycero-3-phosphate + CTP + H(+) = 1,2-di-(9Z-octadecenoyl)-sn-glycero-3-cytidine-5'-diphosphate + diphosphate. The protein operates within phospholipid metabolism; CDP-diacylglycerol biosynthesis; CDP-diacylglycerol from sn-glycerol 3-phosphate: step 3/3. Its function is as follows. Catalyzes the conversion of phosphatidic acid (PA) to CDP-diacylglycerol (CDP-DAG), an essential intermediate in the synthesis of phosphatidylglycerol, cardiolipin and phosphatidylinositol. Exhibits specificity for the nature of the acyl chains at the sn-1 and sn-2 positions in the substrate, PA and the preferred acyl chain composition is 1-stearoyl-2-arachidonoyl-sn-phosphatidic acid. Plays an important role in regulating the growth and maturation of lipid droplets which are storage organelles at the center of lipid and energy homeostasis. This is Phosphatidate cytidylyltransferase 2 from Rattus norvegicus (Rat).